The chain runs to 394 residues: Ketoisovalerate oxidoreductase subunit VorA (394 aa).

As to quaternary structure, heterotetramer of one alpha, one beta, one delta and one gamma chain.

It carries out the reaction 3-methyl-2-oxobutanoate + 2 oxidized [2Fe-2S]-[ferredoxin] + CoA = 2-methylpropanoyl-CoA + 2 reduced [2Fe-2S]-[ferredoxin] + CO2 + H(+). This is Ketoisovalerate oxidoreductase subunit VorA (vorA) from Pyrococcus horikoshii (strain ATCC 700860 / DSM 12428 / JCM 9974 / NBRC 100139 / OT-3).